The chain runs to 155 residues: MLGSIVVISMFMLLMNHPLAFTLSLFVQTLLICVMLKNVSLWISLILFLIFLGGILVMFIYVSSLSANEKFAVDLTSFMWVVPTIVLSFLVLNKNFMFMSPSSGYLYPTDFVIINFNVNSLTMLAYSFMVVYLFLALLLVIDFLNSNKKPLRSMI.

4 helical membrane passes run 1 to 21 (MLGS…PLAF), 42 to 62 (WISL…FIYV), 71 to 91 (FAVD…SFLV), and 121 to 141 (LTML…LLVI).

It belongs to the complex I subunit 6 family.

The protein localises to the mitochondrion membrane. It catalyses the reaction a ubiquinone + NADH + 5 H(+)(in) = a ubiquinol + NAD(+) + 4 H(+)(out). Its function is as follows. Core subunit of the mitochondrial membrane respiratory chain NADH dehydrogenase (Complex I) that is believed to belong to the minimal assembly required for catalysis. Complex I functions in the transfer of electrons from NADH to the respiratory chain. The immediate electron acceptor for the enzyme is believed to be ubiquinone. In Artemia franciscana (Brine shrimp), this protein is NADH-ubiquinone oxidoreductase chain 6 (ND6).